We begin with the raw amino-acid sequence, 167 residues long: Anaerobic nitrite reductase NSHB4 (167 aa).

One can recognise a Globin domain in the interval 12–162 (RFTEEQEALV…LVAAIKEGMK (151 aa)). The Homodimerization motif lies at 45 to 49 (EVAPS). Heme b is bound by residues Ser55, His73, Arg103, Thr107, and His108. The Homodimerization signature appears at 115 to 127 (DTHFEVARFALLE).

This sequence belongs to the plant globin family. In terms of assembly, homodimer. Heme b is required as a cofactor.

Its subcellular location is the cytoplasm. The protein resides in the nucleus. The catalysed reaction is Fe(III)-heme b-[protein] + nitric oxide + H2O = Fe(II)-heme b-[protein] + nitrite + 2 H(+). Functionally, phytoglobin that reduces nitrite to nitric oxide under anoxic conditions (e.g. during flooding or in waterlogged soil). May not function as an oxygen storage or transport protein. Has an unusually high affinity for O(2) through an hexacoordinate heme iron because of a very low dissociation constant. This is Anaerobic nitrite reductase NSHB4 from Oryza sativa subsp. indica (Rice).